A 150-amino-acid chain; its full sequence is MAKVLIIEARFYDHIADGLLAGARAEFDKAGVAHDLLVVPGIFELPAALKLVLTAAEQGNDKARYDGFVTLGCAIRGESDHYHHVGTECMRGIADLSMAYDLALGNGVLTVHNEAQALARSDPARKNLGGQAARACLRMMAVKRELGLSS.

Residues Phe11, 42 to 44, and 73 to 75 contribute to the 5-amino-6-(D-ribitylamino)uracil site; these read IFE and CAI. 78–79 is a (2S)-2-hydroxy-3-oxobutyl phosphate binding site; that stretch reads ES. The active-site Proton donor is the His81. A 5-amino-6-(D-ribitylamino)uracil-binding site is contributed by Asn106. Arg120 is a binding site for (2S)-2-hydroxy-3-oxobutyl phosphate.

It belongs to the DMRL synthase family.

It carries out the reaction (2S)-2-hydroxy-3-oxobutyl phosphate + 5-amino-6-(D-ribitylamino)uracil = 6,7-dimethyl-8-(1-D-ribityl)lumazine + phosphate + 2 H2O + H(+). It functions in the pathway cofactor biosynthesis; riboflavin biosynthesis; riboflavin from 2-hydroxy-3-oxobutyl phosphate and 5-amino-6-(D-ribitylamino)uracil: step 1/2. Catalyzes the formation of 6,7-dimethyl-8-ribityllumazine by condensation of 5-amino-6-(D-ribitylamino)uracil with 3,4-dihydroxy-2-butanone 4-phosphate. This is the penultimate step in the biosynthesis of riboflavin. This is 6,7-dimethyl-8-ribityllumazine synthase from Paramagnetospirillum magneticum (strain ATCC 700264 / AMB-1) (Magnetospirillum magneticum).